A 384-amino-acid polypeptide reads, in one-letter code: Carbamoyl phosphate synthase small chain (384 aa).

The tract at residues Met1 to Val192 is CPSase. Ser51, Gly244, and Gly246 together coordinate L-glutamine. A Glutamine amidotransferase type-1 domain is found at Lys196–Lys382. Cys272 functions as the Nucleophile in the catalytic mechanism. L-glutamine is bound by residues Met273, Gln276, Asn312, Gly314, and Phe315. Active-site residues include His355 and Glu357.

It belongs to the CarA family. Composed of two chains; the small (or glutamine) chain promotes the hydrolysis of glutamine to ammonia, which is used by the large (or ammonia) chain to synthesize carbamoyl phosphate. Tetramer of heterodimers (alpha,beta)4.

It is found in the plastid. The protein resides in the chloroplast. It carries out the reaction hydrogencarbonate + L-glutamine + 2 ATP + H2O = carbamoyl phosphate + L-glutamate + 2 ADP + phosphate + 2 H(+). The catalysed reaction is L-glutamine + H2O = L-glutamate + NH4(+). It functions in the pathway amino-acid biosynthesis; L-arginine biosynthesis; carbamoyl phosphate from bicarbonate: step 1/1. The protein operates within pyrimidine metabolism; UMP biosynthesis via de novo pathway; (S)-dihydroorotate from bicarbonate: step 1/3. Small subunit of the glutamine-dependent carbamoyl phosphate synthetase (CPSase). CPSase catalyzes the formation of carbamoyl phosphate from the ammonia moiety of glutamine, carbonate, and phosphate donated by ATP, constituting the first step of 2 biosynthetic pathways, one leading to arginine and/or urea and the other to pyrimidine nucleotides. The small subunit (glutamine amidotransferase) binds and cleaves glutamine to supply the large subunit with the substrate ammonia. The sequence is that of Carbamoyl phosphate synthase small chain from Pyropia yezoensis (Susabi-nori).